A 546-amino-acid polypeptide reads, in one-letter code: MNSNTKIIFVTGGVVSSLGKGVTAASLATLLESRGLNVTMMKLDPYINVDPGTMSPLQHGEVFVTEDGAETDLDLGHYERFIRNKMTQANNFTTGKVYQSVLRRERKGDYLGATIQVIPHITDEIKRRICSGIADDVDVVIVEIGGTVGDIESQPFLEAIRQLRIELGRNRTLFVHLTLLPYIKVAGEIKTKPTQHSVKELRGIGIQADVLVCRCEKKFDDSEKRKIALFTNVDQDCIFTAEDVDTIYEVPLKYNQQGFDAKLVELLNLNAKEADLSEWQNVVNTIIDVKGEVTIAMVGKYVSLTEAYKSLNEALYNAGYKKGVKVKIKFVDSEDVNENNVESYFKDVAAILVPGGFGSRGIEGKIISIKYARENQIPFLGICLGMQLAVIEYARNILGIKDAHSSELEPTTANPVIGLITEWQAEDGTVHQRTHSSDLGGTMRLGGYKCVLKQGSRAREIYQADEVVERHRHRYEVNSNYVERLEEAGLIFSGRSEDNKLMELIEIPQHKWFIACQAHPEFTSTPRYGHKLFESYIQAAIENSNN.

The tract at residues 1 to 269 is amidoligase domain; it reads MNSNTKIIFV…DAKLVELLNL (269 aa). Position 16 (S16) interacts with CTP. S16 contacts UTP. ATP is bound by residues 17-22 and D74; that span reads SLGKGV. Positions 74 and 143 each coordinate Mg(2+). CTP-binding positions include 150–152, 190–195, and K226; these read DIE and KTKPTQ. Residues 190 to 195 and K226 contribute to the UTP site; that span reads KTKPTQ. Residues 294-546 form the Glutamine amidotransferase type-1 domain; that stretch reads TIAMVGKYVS…IQAAIENSNN (253 aa). G356 contacts L-glutamine. Catalysis depends on C383, which acts as the Nucleophile; for glutamine hydrolysis. L-glutamine is bound by residues 384–387, E407, and R474; that span reads LGMQ. Active-site residues include H519 and E521.

It belongs to the CTP synthase family. In terms of assembly, homotetramer.

It catalyses the reaction UTP + L-glutamine + ATP + H2O = CTP + L-glutamate + ADP + phosphate + 2 H(+). It carries out the reaction L-glutamine + H2O = L-glutamate + NH4(+). The catalysed reaction is UTP + NH4(+) + ATP = CTP + ADP + phosphate + 2 H(+). The protein operates within pyrimidine metabolism; CTP biosynthesis via de novo pathway; CTP from UDP: step 2/2. Allosterically activated by GTP, when glutamine is the substrate; GTP has no effect on the reaction when ammonia is the substrate. The allosteric effector GTP functions by stabilizing the protein conformation that binds the tetrahedral intermediate(s) formed during glutamine hydrolysis. Inhibited by the product CTP, via allosteric rather than competitive inhibition. In terms of biological role, catalyzes the ATP-dependent amination of UTP to CTP with either L-glutamine or ammonia as the source of nitrogen. Regulates intracellular CTP levels through interactions with the four ribonucleotide triphosphates. This is CTP synthase from Francisella tularensis subsp. mediasiatica (strain FSC147).